We begin with the raw amino-acid sequence, 248 residues long: MAGHSQFKNIMHRKGRQDAMKSKLFGKLAREITVAAKLGTPDPAMNPRLRAAVVAARAENMPKDNIERAIKKALGGEGENYAEIRYEGYGPGGVAVIVEALTDNRNRAASDIRSYFTKSGGNLGETGSVSFMFDRVGIIEFDRSVASDDAVLDAAIEAGADDVISGEGGHEVYASPDSFHEVAKNLEAKFGEPRKAALTWKPQNTVSVDDETGEKLLKLMDLLNEHDDVQNVYANFEISDALMAKMGG.

The protein belongs to the TACO1 family.

It localises to the cytoplasm. The chain is Probable transcriptional regulatory protein BBta_6910 from Bradyrhizobium sp. (strain BTAi1 / ATCC BAA-1182).